The sequence spans 85 residues: Neurotoxin beta-KTx 14.3 (85 aa).

The first 20 residues, 1–20, serve as a signal peptide directing secretion; the sequence is MKQYIFFLALIVLTATFAEA. A propeptide spanning residues 21-37 is cleaved from the precursor; that stretch reads GKKTEILDKVKKVFSKG. One can recognise a BetaSPN-type CS-alpha/beta domain in the interval 49-85; it reads ELGCPFIEKWCEDHCESKKQVGKCENFDCSCVKLGGK. Cystine bridges form between Cys-52–Cys-72, Cys-59–Cys-77, and Cys-63–Cys-79.

This sequence belongs to the long chain scorpion toxin family. Class 2 subfamily. In terms of tissue distribution, expressed by the venom gland.

It is found in the secreted. Functionally, toxin with activity on voltage-gated potassium channels. Moderately and reversibly blocks up to 50% of the activity of Kv7.1/KCNQ1 (tested at 22 uM). 3D-structure modeling of the KCNQ1-toxin complex shows that the toxin interacts with the channel pore domain. Additionally, shows a very weak effect to block voltage-gated potassium channel Kv1.1/KCNA1. Has a very weak effect to block voltage-gated potassium channel Kv1.1/KCNA1. The polypeptide is Neurotoxin beta-KTx 14.3 (Lychas mucronatus (Chinese swimming scorpion)).